Consider the following 224-residue polypeptide: E3 ubiquitin-protein ligase TRIM48 (224 aa).

The RING-type zinc finger occupies 31–72; that stretch reads CPICMNYFIDPVTIDCGHSFCRPCFYLNWQDIPILTQCFECI. A B box-type zinc finger spans residues 104–145; the sequence is SEEQMCGIHRETKKMFCEVDRSLLCLLCSSSQEHRYHRHCPA. The Zn(2+) site is built by Cys-109, His-112, Cys-131, and His-137.

Belongs to the TRIM/RBCC family. As to quaternary structure, interacts with PRMT1; the interaction leads to ubiquitination of PRMT1 by TRIM48. Interacts with MAP3K5. Interacts with STRAP.

It localises to the cytoplasm. It is found in the cytosol. It catalyses the reaction S-ubiquitinyl-[E2 ubiquitin-conjugating enzyme]-L-cysteine + [acceptor protein]-L-lysine = [E2 ubiquitin-conjugating enzyme]-L-cysteine + N(6)-ubiquitinyl-[acceptor protein]-L-lysine.. In terms of biological role, E3 ubiquitin-protein ligase which promotes K48-linked polyubiquitination of protein methyltransferase PRMT1, leading to PRMT1 degradation. This suppresses methylation of the PRMT1 substrate MAP3K5/ASK1, promoting its activation and increasing MAP3K5-dependent cell death induced by oxidative stress. TRIM48-mediated ubiquitination of PRMT1 also suppresses methylation of FOXO1 by PRMT1, leading to inhibition of FOXO1 transcriptional activity. The protein is E3 ubiquitin-protein ligase TRIM48 of Homo sapiens (Human).